A 156-amino-acid chain; its full sequence is MNINSTLFLQAVVFAILVWFTMKFVWPPITKALDERAQKIADGLAAADKAKSELSSANKRVEAELATSRTETATRLADADRRGQGIIEDAKARAVEEANKIIAAAQAEAAQQSVKAREALREQVALLAVKGAEQILRKEVNAGVHADLLSRLKTEL.

A helical transmembrane segment spans residues 7–27 (LFLQAVVFAILVWFTMKFVWP).

It belongs to the ATPase B chain family. F-type ATPases have 2 components, F(1) - the catalytic core - and F(0) - the membrane proton channel. F(1) has five subunits: alpha(3), beta(3), gamma(1), delta(1), epsilon(1). F(0) has three main subunits: a(1), b(2) and c(10-14). The alpha and beta chains form an alternating ring which encloses part of the gamma chain. F(1) is attached to F(0) by a central stalk formed by the gamma and epsilon chains, while a peripheral stalk is formed by the delta and b chains.

Its subcellular location is the cell inner membrane. Its function is as follows. F(1)F(0) ATP synthase produces ATP from ADP in the presence of a proton or sodium gradient. F-type ATPases consist of two structural domains, F(1) containing the extramembraneous catalytic core and F(0) containing the membrane proton channel, linked together by a central stalk and a peripheral stalk. During catalysis, ATP synthesis in the catalytic domain of F(1) is coupled via a rotary mechanism of the central stalk subunits to proton translocation. Component of the F(0) channel, it forms part of the peripheral stalk, linking F(1) to F(0). This is ATP synthase subunit b from Polaromonas naphthalenivorans (strain CJ2).